Reading from the N-terminus, the 871-residue chain is DNA mismatch repair protein MutS 1 (871 aa).

An ATP-binding site is contributed by 614–621 (GPNMSGKS).

This sequence belongs to the DNA mismatch repair MutS family.

In terms of biological role, this protein is involved in the repair of mismatches in DNA. It is possible that it carries out the mismatch recognition step. This protein has a weak ATPase activity. In Halobacterium salinarum (strain ATCC 29341 / DSM 671 / R1), this protein is DNA mismatch repair protein MutS 1.